The sequence spans 234 residues: Small ribosomal subunit protein eS4 (234 aa).

The S4 RNA-binding domain maps to 37-99; sequence VPLLIVLRDV…REEYYRVFPG (63 aa).

Belongs to the eukaryotic ribosomal protein eS4 family.

This Haloarcula marismortui (strain ATCC 43049 / DSM 3752 / JCM 8966 / VKM B-1809) (Halobacterium marismortui) protein is Small ribosomal subunit protein eS4 (rps4e).